Reading from the N-terminus, the 206-residue chain is Glycerol-3-phosphate acyltransferase (206 aa).

5 helical membrane passes run 14–34, 67–87, 91–111, 124–144, and 148–168; these read IALA…GLIL, ATLL…GYFL, AAII…WIGF, LLGV…AVAF, and YSSL…LILG.

Belongs to the PlsY family. Probably interacts with PlsX.

The protein resides in the cell inner membrane. It catalyses the reaction an acyl phosphate + sn-glycerol 3-phosphate = a 1-acyl-sn-glycero-3-phosphate + phosphate. Its pathway is lipid metabolism; phospholipid metabolism. Catalyzes the transfer of an acyl group from acyl-phosphate (acyl-PO(4)) to glycerol-3-phosphate (G3P) to form lysophosphatidic acid (LPA). This enzyme utilizes acyl-phosphate as fatty acyl donor, but not acyl-CoA or acyl-ACP. In Rhizobium etli (strain CIAT 652), this protein is Glycerol-3-phosphate acyltransferase.